A 362-amino-acid polypeptide reads, in one-letter code: Heat-inducible transcription repressor HrcA (362 aa).

This sequence belongs to the HrcA family.

Functionally, negative regulator of class I heat shock genes (grpE-dnaK-dnaJ and groELS operons). Prevents heat-shock induction of these operons. This chain is Heat-inducible transcription repressor HrcA, found in Nitrobacter winogradskyi (strain ATCC 25391 / DSM 10237 / CIP 104748 / NCIMB 11846 / Nb-255).